The following is an 88-amino-acid chain: Small ribosomal subunit protein uS15 (88 aa).

The protein belongs to the universal ribosomal protein uS15 family. Part of the 30S ribosomal subunit. Forms a bridge to the 50S subunit in the 70S ribosome, contacting the 23S rRNA.

One of the primary rRNA binding proteins, it binds directly to 16S rRNA where it helps nucleate assembly of the platform of the 30S subunit by binding and bridging several RNA helices of the 16S rRNA. Its function is as follows. Forms an intersubunit bridge (bridge B4) with the 23S rRNA of the 50S subunit in the ribosome. This Psychrobacter cryohalolentis (strain ATCC BAA-1226 / DSM 17306 / VKM B-2378 / K5) protein is Small ribosomal subunit protein uS15.